We begin with the raw amino-acid sequence, 494 residues long: Amidophosphoribosyltransferase (494 aa).

Residues M1 to E10 constitute a propeptide that is removed on maturation. C11 functions as the Nucleophile in the catalytic mechanism. The Glutamine amidotransferase type-2 domain maps to C11 to K231. 3 residues coordinate Mg(2+): S294, D356, and D357.

The protein in the C-terminal section; belongs to the purine/pyrimidine phosphoribosyltransferase family. It depends on Mg(2+) as a cofactor.

The enzyme catalyses 5-phospho-beta-D-ribosylamine + L-glutamate + diphosphate = 5-phospho-alpha-D-ribose 1-diphosphate + L-glutamine + H2O. The protein operates within purine metabolism; IMP biosynthesis via de novo pathway; N(1)-(5-phospho-D-ribosyl)glycinamide from 5-phospho-alpha-D-ribose 1-diphosphate: step 1/2. In terms of biological role, catalyzes the formation of phosphoribosylamine from phosphoribosylpyrophosphate (PRPP) and glutamine. In Staphylococcus aureus (strain Mu50 / ATCC 700699), this protein is Amidophosphoribosyltransferase.